We begin with the raw amino-acid sequence, 594 residues long: UvrABC system protein C (594 aa).

In terms of domain architecture, GIY-YIG spans 13-99 (NSSGVYQYFD…IKQLKPKYNI (87 aa)). The UVR domain maps to 205–240 (DRLIKELELKMERLSNNLRFEEALIYRDRIAKIQKI).

Belongs to the UvrC family. In terms of assembly, interacts with UvrB in an incision complex.

The protein localises to the cytoplasm. Functionally, the UvrABC repair system catalyzes the recognition and processing of DNA lesions. UvrC both incises the 5' and 3' sides of the lesion. The N-terminal half is responsible for the 3' incision and the C-terminal half is responsible for the 5' incision. In Helicobacter pylori (strain ATCC 700392 / 26695) (Campylobacter pylori), this protein is UvrABC system protein C.